The sequence spans 696 residues: MGSWLSEVQWLFLVSLFVAALGTVGLYLAQWALAKARPPPRRRAEPDELRRRESDTLLSWILTRDSWGNQWQAAWVTALNYEAEKRGGPLRLSFQKDPRPQSLQLTVEKVSSVVKSTQEKVVICHVVGETLQFLVSAGPASATGSECQLYDVHLSPFHLKVEFHMEEKREDIQIRWSFTHVPETAIKIQPQAPGEKQALGVNMLSEALEDLFKHLVNAASPSVFLSTKPTQVKEAQSLQCPSSTAQEPCPPKPPRAHELKLQVKNIRVSLINHPGASGLSHVCVAQLNDPEQRFISTLVRNTTDLSWEEEFTFELNAKSKELVLQISQDGCSSEGLLGIATIHLDLFRKQPNGPQTFRLISGTEPDSLVLGSVTAEFSYVEPGELKSWPAPPPVSAAKIEKDRTVMPCGTVVTTVTAVKTKPRFDTGRATPLNSESPVRTPVTVKVIEKDISVQAISCHSAPVSKTFSSSDTELLVLNGSDPVAEVAIRQLSESSKLKLKSPRKKSTIIISGISKTSLSQDHNAALMLDYAASMDSTNQGDATSALCHPEATEASATTPPEENEPAQTLPALKPRENDLDSWELEKESPVASWSGPALQEPDGDELSESSLSTSELGAMKKHKGGLLRKGAKLFFRRRHQQKDPGLSQSHNDLVFLQQPEGRQKKGATLGRLLNRKLLTRHRGKHTMNGVPREPCI.

The chain crosses the membrane as a helical span at residues 8–28; that stretch reads VQWLFLVSLFVAALGTVGLYL. Residues 45 to 238 form the SMP-LBD domain; sequence EPDELRRRES…PTQVKEAQSL (194 aa). Ser54 is modified (phosphoserine). The region spanning 241 to 357 is the C2 domain; the sequence is PSSTAQEPCP…RKQPNGPQTF (117 aa). Ser436 carries the post-translational modification Phosphoserine. The residue at position 440 (Thr440) is a Phosphothreonine. The segment at 551–611 is disordered; that stretch reads ATEASATTPP…DGDELSESSL (61 aa). Over residues 573–588 the composition is skewed to basic and acidic residues; sequence KPRENDLDSWELEKES. Ser581 is subject to Phosphoserine.

The protein localises to the membrane. The chain is C2 domain-containing protein 2 from Mus musculus (Mouse).